A 184-amino-acid chain; its full sequence is ATP synthase subunit b, chloroplastic (184 aa).

Residues 27 to 49 (LATNLINLSVVLGVLIFFGKGVL) form a helical membrane-spanning segment.

It belongs to the ATPase B chain family. As to quaternary structure, F-type ATPases have 2 components, F(1) - the catalytic core - and F(0) - the membrane proton channel. F(1) has five subunits: alpha(3), beta(3), gamma(1), delta(1), epsilon(1). F(0) has four main subunits: a(1), b(1), b'(1) and c(10-14). The alpha and beta chains form an alternating ring which encloses part of the gamma chain. F(1) is attached to F(0) by a central stalk formed by the gamma and epsilon chains, while a peripheral stalk is formed by the delta, b and b' chains.

The protein localises to the plastid. It is found in the chloroplast thylakoid membrane. F(1)F(0) ATP synthase produces ATP from ADP in the presence of a proton or sodium gradient. F-type ATPases consist of two structural domains, F(1) containing the extramembraneous catalytic core and F(0) containing the membrane proton channel, linked together by a central stalk and a peripheral stalk. During catalysis, ATP synthesis in the catalytic domain of F(1) is coupled via a rotary mechanism of the central stalk subunits to proton translocation. Its function is as follows. Component of the F(0) channel, it forms part of the peripheral stalk, linking F(1) to F(0). This is ATP synthase subunit b, chloroplastic from Helianthus annuus (Common sunflower).